The sequence spans 1401 residues: MAP kinase kinase kinase wis4 (1401 aa).

2 disordered regions span residues 67 to 99 and 176 to 205; these read HIPL…MSYT and QDSI…NDFS. 2 stretches are compositionally biased toward polar residues: residues 72-99 and 176-191; these read PSHS…MSYT and QDSI…NQSL. The Protein kinase domain maps to 1037–1306; sequence WQQGHFVRSG…AVDLLTHPWI (270 aa). Residues 1043-1051 and Lys-1066 each bind ATP; that span reads VRSGMFGDV. Asp-1161 acts as the Proton acceptor in catalysis.

The protein belongs to the protein kinase superfamily. STE Ser/Thr protein kinase family. MAP kinase kinase kinase subfamily.

The enzyme catalyses L-seryl-[protein] + ATP = O-phospho-L-seryl-[protein] + ADP + H(+). The catalysed reaction is L-threonyl-[protein] + ATP = O-phospho-L-threonyl-[protein] + ADP + H(+). In terms of biological role, involved in a signal transduction pathway that is activated in under conditions of heat shock, oxidative stress or limited nutrition. Unlike win1, it is not activated by changes in the osmolarity of the extracellular environment. Activates the wis1 MAP kinase kinase by phosphorylation. This Schizosaccharomyces pombe (strain 972 / ATCC 24843) (Fission yeast) protein is MAP kinase kinase kinase wis4 (wis4).